An 83-amino-acid chain; its full sequence is MADATEKAEHDRIFKKFDANGDGKISAAELEEALKTLGSVTADDVKRMMAEIDTDGDGNISYQEFTDFAGANRGLMKDVAKIF.

2 EF-hand domains span residues 5–40 (TEKA…LGSV) and 43–75 (DDVK…NRGL). D18, N20, D22, K24, E29, D53, D55, D57, N59, and E64 together coordinate Ca(2+).

In terms of biological role, potential calcium sensor. The protein is Probable calcium-binding protein CML29 (CML29) of Arabidopsis thaliana (Mouse-ear cress).